The following is a 297-amino-acid chain: N-acetylmuramic acid 6-phosphate etherase (297 aa).

In terms of domain architecture, SIS spans 55 to 218 (ITKHFKQGGR…STGAMVGIGK (164 aa)). E83 acts as the Proton donor in catalysis. The active site involves E114.

It belongs to the GCKR-like family. MurNAc-6-P etherase subfamily. As to quaternary structure, homodimer.

It catalyses the reaction N-acetyl-D-muramate 6-phosphate + H2O = N-acetyl-D-glucosamine 6-phosphate + (R)-lactate. Its pathway is amino-sugar metabolism; N-acetylmuramate degradation. Functionally, specifically catalyzes the cleavage of the D-lactyl ether substituent of MurNAc 6-phosphate, producing GlcNAc 6-phosphate and D-lactate. The protein is N-acetylmuramic acid 6-phosphate etherase of Oenococcus oeni (strain ATCC BAA-331 / PSU-1).